We begin with the raw amino-acid sequence, 83 residues long: Small ribosomal subunit protein eS27 (83 aa).

The C4-type zinc finger occupies 37–59; sequence CPGCFNITTVFSHAQTVVICGSC.

Belongs to the eukaryotic ribosomal protein eS27 family. In terms of assembly, component of the small ribosomal subunit (SSU). Mature yeast ribosomes consist of a small (40S) and a large (60S) subunit. The 40S small subunit contains 1 molecule of ribosomal RNA (18S rRNA) and at least 33 different proteins. The large 60S subunit contains 3 rRNA molecules (25S, 5.8S and 5S rRNA) and at least 46 different proteins. The cofactor is Zn(2+).

Its subcellular location is the cytoplasm. Functionally, component of the ribosome, a large ribonucleoprotein complex responsible for the synthesis of proteins in the cell. The small ribosomal subunit (SSU) binds messenger RNAs (mRNAs) and translates the encoded message by selecting cognate aminoacyl-transfer RNA (tRNA) molecules. The large subunit (LSU) contains the ribosomal catalytic site termed the peptidyl transferase center (PTC), which catalyzes the formation of peptide bonds, thereby polymerizing the amino acids delivered by tRNAs into a polypeptide chain. The nascent polypeptides leave the ribosome through a tunnel in the LSU and interact with protein factors that function in enzymatic processing, targeting, and the membrane insertion of nascent chains at the exit of the ribosomal tunnel. The protein is Small ribosomal subunit protein eS27 (rps27) of Schizosaccharomyces pombe (strain 972 / ATCC 24843) (Fission yeast).